Consider the following 135-residue polypeptide: UPF0355 protein SE_2351 (135 aa).

It belongs to the UPF0355 family.

In Staphylococcus epidermidis (strain ATCC 12228 / FDA PCI 1200), this protein is UPF0355 protein SE_2351.